A 167-amino-acid polypeptide reads, in one-letter code: Methyl-coenzyme M reductase II operon protein D (167 aa).

MCR is composed of three subunits: alpha, beta, and gamma. The function of protein D is not known.

The polypeptide is Methyl-coenzyme M reductase II operon protein D (mrtD) (Methanocaldococcus jannaschii (strain ATCC 43067 / DSM 2661 / JAL-1 / JCM 10045 / NBRC 100440) (Methanococcus jannaschii)).